Here is a 270-residue protein sequence, read N- to C-terminus: Beta carbonic anhydrase 1 (270 aa).

4 residues coordinate Zn(2+): cysteine 39, aspartate 41, histidine 105, and cysteine 108.

The protein belongs to the beta-class carbonic anhydrase family. Requires Zn(2+) as cofactor.

It catalyses the reaction hydrogencarbonate + H(+) = CO2 + H2O. In terms of biological role, reversible hydration of carbon dioxide. In Caenorhabditis briggsae, this protein is Beta carbonic anhydrase 1.